The sequence spans 315 residues: Protein translocase subunit SecF (315 aa).

6 helical membrane-spanning segments follow: residues 12 to 32 (AWIVSSLLVLISIFAMAISWA), 136 to 156 (ALFRSGVLALVISLLGIIIYL), 166 to 186 (VFAIIALLYDALITMGAFAIF), 188 to 208 (LVGGVEVDSLFLVALLTIIGF), 247 to 267 (SINTSLTTSLPLVAIFLFGGD), and 271 to 291 (FFALALIIGFASGVYSSIFMA).

Belongs to the SecD/SecF family. SecF subfamily. In terms of assembly, forms a complex with SecD. Part of the essential Sec protein translocation apparatus which comprises SecA, SecYEG and auxiliary proteins SecDF. Other proteins may also be involved.

Its subcellular location is the cell inner membrane. Part of the Sec protein translocase complex. Interacts with the SecYEG preprotein conducting channel. SecDF uses the proton motive force (PMF) to complete protein translocation after the ATP-dependent function of SecA. Its function is as follows. Probably participates in protein translocation into and across both the cytoplasmic and thylakoid membranes in cyanobacterial cells. The protein is Protein translocase subunit SecF of Synechocystis sp. (strain ATCC 27184 / PCC 6803 / Kazusa).